We begin with the raw amino-acid sequence, 260 residues long: Adenosylcobinamide-GDP ribazoletransferase (260 aa).

Helical transmembrane passes span 40–60 (AFPL…FMAY), 64–84 (LPPL…TGAL), 117–137 (FAAL…MTII), 192–212 (GIGL…LSLI), 214–234 (ALVL…AKIG), and 240–260 (TLGA…VMAL).

It belongs to the CobS family. The cofactor is Mg(2+).

The protein resides in the cell inner membrane. It catalyses the reaction alpha-ribazole + adenosylcob(III)inamide-GDP = adenosylcob(III)alamin + GMP + H(+). It carries out the reaction alpha-ribazole 5'-phosphate + adenosylcob(III)inamide-GDP = adenosylcob(III)alamin 5'-phosphate + GMP + H(+). It functions in the pathway cofactor biosynthesis; adenosylcobalamin biosynthesis; adenosylcobalamin from cob(II)yrinate a,c-diamide: step 7/7. Functionally, joins adenosylcobinamide-GDP and alpha-ribazole to generate adenosylcobalamin (Ado-cobalamin). Also synthesizes adenosylcobalamin 5'-phosphate from adenosylcobinamide-GDP and alpha-ribazole 5'-phosphate. This chain is Adenosylcobinamide-GDP ribazoletransferase, found in Brucella anthropi (strain ATCC 49188 / DSM 6882 / CCUG 24695 / JCM 21032 / LMG 3331 / NBRC 15819 / NCTC 12168 / Alc 37) (Ochrobactrum anthropi).